The primary structure comprises 241 residues: Ubiquinone biosynthesis O-methyltransferase (241 aa).

Arg-42, Gly-62, Asp-83, and Met-127 together coordinate S-adenosyl-L-methionine.

The protein belongs to the methyltransferase superfamily. UbiG/COQ3 family.

The enzyme catalyses a 3-demethylubiquinol + S-adenosyl-L-methionine = a ubiquinol + S-adenosyl-L-homocysteine + H(+). It catalyses the reaction a 3-(all-trans-polyprenyl)benzene-1,2-diol + S-adenosyl-L-methionine = a 2-methoxy-6-(all-trans-polyprenyl)phenol + S-adenosyl-L-homocysteine + H(+). Its pathway is cofactor biosynthesis; ubiquinone biosynthesis. Functionally, O-methyltransferase that catalyzes the 2 O-methylation steps in the ubiquinone biosynthetic pathway. This Pectobacterium atrosepticum (strain SCRI 1043 / ATCC BAA-672) (Erwinia carotovora subsp. atroseptica) protein is Ubiquinone biosynthesis O-methyltransferase.